The sequence spans 144 residues: Large ribosomal subunit protein uL13 (144 aa).

This sequence belongs to the universal ribosomal protein uL13 family. As to quaternary structure, part of the 50S ribosomal subunit.

Functionally, this protein is one of the early assembly proteins of the 50S ribosomal subunit, although it is not seen to bind rRNA by itself. It is important during the early stages of 50S assembly. This chain is Large ribosomal subunit protein uL13, found in Nitrosomonas europaea (strain ATCC 19718 / CIP 103999 / KCTC 2705 / NBRC 14298).